The primary structure comprises 352 residues: Uroporphyrinogen decarboxylase (352 aa).

Substrate contacts are provided by residues 26–30 (RQAGR), Asp-76, Tyr-153, Ser-208, and His-323.

Belongs to the uroporphyrinogen decarboxylase family. Homodimer.

The protein resides in the cytoplasm. It catalyses the reaction uroporphyrinogen III + 4 H(+) = coproporphyrinogen III + 4 CO2. It participates in porphyrin-containing compound metabolism; protoporphyrin-IX biosynthesis; coproporphyrinogen-III from 5-aminolevulinate: step 4/4. In terms of biological role, catalyzes the decarboxylation of four acetate groups of uroporphyrinogen-III to yield coproporphyrinogen-III. In Prochlorococcus marinus (strain MIT 9303), this protein is Uroporphyrinogen decarboxylase.